Reading from the N-terminus, the 359-residue chain is Protein Wnt-5b (359 aa).

Positions 1–17 (MPSLLLLFTAALLSSWA) are cleaved as a signal peptide. The cysteines at positions 83 and 94 are disulfide-linked. N93 and N99 each carry an N-linked (GlcNAc...) asparagine glycan. Disulfide bonds link C133-C141, C143-C161, C217-C231, C219-C226, C288-C319, C304-C314, C318-C358, C334-C349, C336-C346, and C341-C342. S223 carries the O-palmitoleoyl serine; by PORCN lipid modification. N-linked (GlcNAc...) asparagine glycosylation is found at N291 and N305.

This sequence belongs to the Wnt family. In terms of assembly, interacts with PORCN. In terms of processing, palmitoleoylation is required for efficient binding to frizzled receptors. Depalmitoleoylation leads to Wnt signaling pathway inhibition.

It is found in the secreted. The protein localises to the extracellular space. It localises to the extracellular matrix. Its function is as follows. Ligand for members of the frizzled family of seven transmembrane receptors. Probable developmental protein. May be a signaling molecule which affects the development of discrete regions of tissues. Is likely to signal over only few cell diameters. The sequence is that of Protein Wnt-5b (WNT5B) from Pongo abelii (Sumatran orangutan).